A 213-amino-acid chain; its full sequence is Phosphoribosyl-dephospho-CoA transferase (213 aa).

Active-site residues include D135 and D137.

The protein belongs to the MdcG family.

It carries out the reaction apo-[malonate decarboxylase ACP] + 2'-(5''-triphospho-alpha-D-ribosyl)-3'-dephospho-CoA = holo-[malonate decarboxylase ACP] + diphosphate. Transfers 2'-(5-triphosphoribosyl)-3'-dephosphocoenzyme-A to the apo-[acyl-carrier-protein] of the malonate decarboxylase to yield holo-[acyl-carrier-protein]. This chain is Phosphoribosyl-dephospho-CoA transferase, found in Xanthomonas euvesicatoria pv. vesicatoria (strain 85-10) (Xanthomonas campestris pv. vesicatoria).